We begin with the raw amino-acid sequence, 101 residues long: Small ribosomal subunit protein uS14 (101 aa).

Positions 36-72 are disordered; that stretch reads GTDESREAARAGIQRLPRDASPIRVRNRDGIDGRPRG. Residues 61 to 70 are compositionally biased toward basic and acidic residues; the sequence is RNRDGIDGRP.

The protein belongs to the universal ribosomal protein uS14 family. As to quaternary structure, part of the 30S ribosomal subunit. Contacts proteins S3 and S10.

Functionally, binds 16S rRNA, required for the assembly of 30S particles and may also be responsible for determining the conformation of the 16S rRNA at the A site. The chain is Small ribosomal subunit protein uS14 from Clavibacter michiganensis subsp. michiganensis (strain NCPPB 382).